A 93-amino-acid chain; its full sequence is uncharacterized protein (93 aa).

This is an uncharacterized protein from Gallid herpesvirus 2 (strain Chicken/Md5/ATCC VR-987) (GaHV-2).